Reading from the N-terminus, the 121-residue chain is MEKALSLEELLAEYREETEEIVEAILEDGSNPDAVYMIEHHLSCTDFDVLEKAAIACFKKGYEVTDPEECELEDGSIILSFDVTVEMNLDEEAIMEDIEKLVVLAQSFSIDYDGWGTYPEE.

The protein belongs to the RraB family. In terms of assembly, interacts with the C-terminal region of Rne.

The protein resides in the cytoplasm. Functionally, globally modulates RNA abundance by binding to RNase E (Rne) and regulating its endonucleolytic activity. Can modulate Rne action in a substrate-dependent manner by altering the composition of the degradosome. The chain is Regulator of ribonuclease activity B from Psychromonas ingrahamii (strain DSM 17664 / CCUG 51855 / 37).